The chain runs to 378 residues: Acetylornithine deacetylase (378 aa).

Zn(2+) is bound at residue histidine 76. The active site involves aspartate 78. Aspartate 108 lines the Zn(2+) pocket. Glutamate 140 is a catalytic residue. Residues glutamate 141, glutamate 165, and histidine 351 each contribute to the Zn(2+) site.

It belongs to the peptidase M20A family. ArgE subfamily. Homodimer. The cofactor is Zn(2+). Co(2+) serves as cofactor. Requires glutathione as cofactor.

The protein resides in the cytoplasm. It carries out the reaction N(2)-acetyl-L-ornithine + H2O = L-ornithine + acetate. Its pathway is amino-acid biosynthesis; L-arginine biosynthesis; L-ornithine from N(2)-acetyl-L-ornithine (linear): step 1/1. Its function is as follows. Catalyzes the hydrolysis of the amide bond of N(2)-acetylated L-amino acids. Cleaves the acetyl group from N-acetyl-L-ornithine to form L-ornithine, an intermediate in L-arginine biosynthesis pathway, and a branchpoint in the synthesis of polyamines. The chain is Acetylornithine deacetylase from Aliivibrio fischeri (strain ATCC 700601 / ES114) (Vibrio fischeri).